The chain runs to 223 residues: NADH-quinone oxidoreductase subunit C (223 aa).

This sequence belongs to the complex I 30 kDa subunit family. In terms of assembly, NDH-1 is composed of 14 different subunits. Subunits NuoB, C, D, E, F, and G constitute the peripheral sector of the complex.

Its subcellular location is the cell inner membrane. It catalyses the reaction a quinone + NADH + 5 H(+)(in) = a quinol + NAD(+) + 4 H(+)(out). NDH-1 shuttles electrons from NADH, via FMN and iron-sulfur (Fe-S) centers, to quinones in the respiratory chain. The immediate electron acceptor for the enzyme in this species is believed to be ubiquinone. Couples the redox reaction to proton translocation (for every two electrons transferred, four hydrogen ions are translocated across the cytoplasmic membrane), and thus conserves the redox energy in a proton gradient. This Hydrogenovibrio crunogenus (strain DSM 25203 / XCL-2) (Thiomicrospira crunogena) protein is NADH-quinone oxidoreductase subunit C.